Reading from the N-terminus, the 298-residue chain is MEEFDSEDFSTSEEDEDYVPSGGEYSEDDINELVKEDEVDVEEETHIIKGTKRKAERFMPRKRKQGGLSLEEEDEEDAGRESGGSGSEEEDTATEQEEGTESEDARKKKEDELWASFLNDVGPKSKVPPSTPVKTGEETEETSSSNLVKAEEQEKPKETEKVKITKVFDFAGEEVRVTKEVDPTSKEAKSFFKQSEKEKPQPNVPSAVSSLPAGSGLKRSSGMSSLLGKIGAKKQKMSTLEKSKLDWENFKEEEGIAEELAIHNRGKEGYIERKAFLDRVDHRQFEIERDLRLSKMKP.

2 stretches are compositionally biased toward acidic residues: residues Met1–Tyr18 and Tyr25–Glu43. Disordered regions lie at residues Met1–Thr159 and Lys179–Met223. Positions Lys49 to Gln65 are enriched in basic residues. A phosphoserine mark is found at Ser82 and Ser85. Residues Ser87–Ser102 show a composition bias toward acidic residues. The span at Glu103–Glu112 shows a compositional bias: basic and acidic residues. Ser116 is subject to Phosphoserine. Residues Lys124–Lys134 are compositionally biased toward low complexity. A Glycyl lysine isopeptide (Lys-Gly) (interchain with G-Cter in SUMO2) cross-link involves residue Lys149. Basic and acidic residues-rich tracts occupy residues Lys149 to Thr159 and Lys179 to Pro200. The hydrophilic stretch occupies residues Val177–Gly216. A Phosphoserine modification is found at Ser215. Residues Leu217 to Pro298 form the BCNT-C domain. An N6-methyllysine modification is found at Lys218.

The protein localises to the chromosome. The protein resides in the centromere. It localises to the kinetochore. Functionally, may play a role during embryogenesis. This Tragulus javanicus (Lesser Malay chevrotain) protein is Craniofacial development protein 1 (CFDP1).